Reading from the N-terminus, the 235-residue chain is Phosphoribosylaminoimidazole-succinocarboxamide synthase (235 aa).

It belongs to the SAICAR synthetase family.

The catalysed reaction is 5-amino-1-(5-phospho-D-ribosyl)imidazole-4-carboxylate + L-aspartate + ATP = (2S)-2-[5-amino-1-(5-phospho-beta-D-ribosyl)imidazole-4-carboxamido]succinate + ADP + phosphate + 2 H(+). The protein operates within purine metabolism; IMP biosynthesis via de novo pathway; 5-amino-1-(5-phospho-D-ribosyl)imidazole-4-carboxamide from 5-amino-1-(5-phospho-D-ribosyl)imidazole-4-carboxylate: step 1/2. This chain is Phosphoribosylaminoimidazole-succinocarboxamide synthase, found in Streptococcus pneumoniae serotype 19F (strain G54).